A 342-amino-acid chain; its full sequence is L-threonine 3-dehydrogenase (342 aa).

A Zn(2+)-binding site is contributed by C38. Residues T40 and H43 each act as charge relay system in the active site. Residues H63, E64, C93, C96, C99, and C107 each contribute to the Zn(2+) site. Residues I175, D195, R200, 262–264 (LGI), and 286–287 (IY) contribute to the NAD(+) site.

It belongs to the zinc-containing alcohol dehydrogenase family. In terms of assembly, homotetramer. Requires Zn(2+) as cofactor.

It localises to the cytoplasm. It carries out the reaction L-threonine + NAD(+) = (2S)-2-amino-3-oxobutanoate + NADH + H(+). It functions in the pathway amino-acid degradation; L-threonine degradation via oxydo-reductase pathway; glycine from L-threonine: step 1/2. Catalyzes the NAD(+)-dependent oxidation of L-threonine to 2-amino-3-ketobutyrate. In Burkholderia multivorans (strain ATCC 17616 / 249), this protein is L-threonine 3-dehydrogenase.